The sequence spans 80 residues: FXYD domain-containing ion transport regulator 7 (80 aa).

Residues 1 to 23 (MATPTQTPTKAPEEPDPFYYDYN) are Extracellular-facing. O-linked (GlcNAc) threonine glycans are attached at residues threonine 3, threonine 5, and threonine 9. Residues 24–46 (TVQTVGMTLATILFLLGILIVIS) form a helical membrane-spanning segment. Over 47-80 (KKVKCRKADSRSESPTCKSCKSELPSSAPGGGGV) the chain is Cytoplasmic. The interval 54-80 (ADSRSESPTCKSCKSELPSSAPGGGGV) is disordered. Serine 73 carries the post-translational modification Phosphoserine.

This sequence belongs to the FXYD family. Regulatory subunit of the sodium/potassium-transporting ATPase which is composed of a catalytic alpha subunit, a non-catalytic beta subunit and a FXYD regulatory unit that modulates the enzymatic activity in a tissue- and isoform-specific way by changing affinities of the Na+/K+-ATPase toward Na(+), K(+) or ATP. In terms of processing, O-glycosylated; required for stabilization and translocation to the plasma membrane.

The protein resides in the cell membrane. Associates with and regulates the activity of the sodium/potassium-transporting ATPase (NKA) which catalyzes the hydrolysis of ATP coupled with the exchange of Na(+) and K(+) ions across the plasma membrane. Reduces the apparent affinity for external K(+), an effect that depends on the presence of external Na(+) and voltage. Increases the apparent affinity for intracellular Na(+). The chain is FXYD domain-containing ion transport regulator 7 (FXYD7) from Homo sapiens (Human).